The chain runs to 92 residues: Exodeoxyribonuclease 7 small subunit (92 aa).

The interval 1 to 22 (MPKKNAISESTNSTPETAPAMT) is disordered. The span at 7 to 16 (ISESTNSTPE) shows a compositional bias: polar residues.

It belongs to the XseB family. Heterooligomer composed of large and small subunits.

The protein resides in the cytoplasm. It carries out the reaction Exonucleolytic cleavage in either 5'- to 3'- or 3'- to 5'-direction to yield nucleoside 5'-phosphates.. Its function is as follows. Bidirectionally degrades single-stranded DNA into large acid-insoluble oligonucleotides, which are then degraded further into small acid-soluble oligonucleotides. The sequence is that of Exodeoxyribonuclease 7 small subunit from Photorhabdus laumondii subsp. laumondii (strain DSM 15139 / CIP 105565 / TT01) (Photorhabdus luminescens subsp. laumondii).